Reading from the N-terminus, the 281-residue chain is Protein phosphatase 2C homolog 1 (281 aa).

The PPM-type phosphatase domain maps to 20-281 (RVGVAENKNS…DNVTVMVVFL (262 aa)). Mn(2+) contacts are provided by D58, G59, D233, and D272.

This sequence belongs to the PP2C family. Interacts with NBP2 and PBS2. Requires Mg(2+) as cofactor. It depends on Mn(2+) as a cofactor.

The protein resides in the peroxisome. It carries out the reaction O-phospho-L-seryl-[protein] + H2O = L-seryl-[protein] + phosphate. The enzyme catalyses O-phospho-L-threonyl-[protein] + H2O = L-threonyl-[protein] + phosphate. Its function is as follows. Serine and threonine phosphatase. Involved in tRNA splicing and cell separation. The polypeptide is Protein phosphatase 2C homolog 1 (PTC1) (Saccharomyces cerevisiae (strain ATCC 204508 / S288c) (Baker's yeast)).